A 704-amino-acid polypeptide reads, in one-letter code: Elongation factor G (704 aa).

Positions 8-291 (DKVRNIGIMA…AVVEYLASPV (284 aa)) constitute a tr-type G domain. GTP-binding positions include 17 to 24 (AHIDAGKT), 90 to 94 (DTPGH), and 144 to 147 (NKMD).

Belongs to the TRAFAC class translation factor GTPase superfamily. Classic translation factor GTPase family. EF-G/EF-2 subfamily.

It is found in the cytoplasm. In terms of biological role, catalyzes the GTP-dependent ribosomal translocation step during translation elongation. During this step, the ribosome changes from the pre-translocational (PRE) to the post-translocational (POST) state as the newly formed A-site-bound peptidyl-tRNA and P-site-bound deacylated tRNA move to the P and E sites, respectively. Catalyzes the coordinated movement of the two tRNA molecules, the mRNA and conformational changes in the ribosome. The sequence is that of Elongation factor G from Pelodictyon phaeoclathratiforme (strain DSM 5477 / BU-1).